We begin with the raw amino-acid sequence, 287 residues long: Tetraspanning orphan receptor (287 aa).

The Extracellular segment spans residues methionine 1–tyrosine 27. The helical transmembrane segment at isoleucine 28–isoleucine 48 threads the bilayer. Residues threonine 49 to leucine 55 are Cytoplasmic-facing. The helical transmembrane segment at leucine 56–phenylalanine 76 threads the bilayer. Residues methionine 77–threonine 91 lie on the Extracellular side of the membrane. The helical transmembrane segment at glycine 92–alanine 114 threads the bilayer. Residues phenylalanine 115 to cysteine 287 are Cytoplasmic-facing. The interval asparagine 165–proline 190 is disordered.

As to quaternary structure, interacts (via N-terminal extracellular domain) with human C2a.

Its subcellular location is the cell membrane. Cell surface receptor that binds to human complement C2a protein. This results in inhibition of the classical and lectin pathways of complement activation, probably due to interference with binding of C2a to C4b and interference with cleavage by C1 or MASP2 such that C3 convertase cannot be formed. This infers resistance to complement-mediated cell lysis, allowing parasite survival and infection. This chain is Tetraspanning orphan receptor, found in Trypanosoma cruzi.